The following is a 261-amino-acid chain: Triosephosphate isomerase (261 aa).

10-12 (NWK) provides a ligand contact to substrate. H100 serves as the catalytic Electrophile. E172 (proton acceptor) is an active-site residue. Residues G178, S218, and 239–240 (GG) contribute to the substrate site.

Belongs to the triosephosphate isomerase family. As to quaternary structure, homodimer.

Its subcellular location is the cytoplasm. The catalysed reaction is D-glyceraldehyde 3-phosphate = dihydroxyacetone phosphate. It functions in the pathway carbohydrate biosynthesis; gluconeogenesis. Its pathway is carbohydrate degradation; glycolysis; D-glyceraldehyde 3-phosphate from glycerone phosphate: step 1/1. Involved in the gluconeogenesis. Catalyzes stereospecifically the conversion of dihydroxyacetone phosphate (DHAP) to D-glyceraldehyde-3-phosphate (G3P). In Saccharopolyspora erythraea (strain ATCC 11635 / DSM 40517 / JCM 4748 / NBRC 13426 / NCIMB 8594 / NRRL 2338), this protein is Triosephosphate isomerase.